A 51-amino-acid polypeptide reads, in one-letter code: Mitochondrial import receptor subunit TOM5 homolog (51 aa).

N-acetylmethionine is present on Met1. Lys10 participates in a covalent cross-link: Glycyl lysine isopeptide (Lys-Gly) (interchain with G-Cter in SUMO2). The chain crosses the membrane as a helical span at residues 27–45; sequence SIRNFLIYVALLRVTPYIL.

This sequence belongs to the Tom5 family. Forms part of the preprotein translocase complex of the outer mitochondrial membrane (TOM complex) which consists of at least 7 different proteins (TOMM5, TOMM6, TOMM7, TOMM20, TOMM22, TOMM40 and TOMM70).

The protein localises to the mitochondrion outer membrane. This is Mitochondrial import receptor subunit TOM5 homolog from Mus musculus (Mouse).